The following is a 287-amino-acid chain: Large ribosomal subunit protein uL3 (287 aa).

Residues 228–287 form a disordered region; the sequence is KAPEAKPAKLSKKKQAKELAKAQAANQQTVEAKVDTPVVEPKPTEVKKAAPVVEKKGEDK. Positions 269-287 are enriched in basic and acidic residues; that stretch reads KPTEVKKAAPVVEKKGEDK.

The protein belongs to the universal ribosomal protein uL3 family. In terms of assembly, part of the 50S ribosomal subunit. Forms a cluster with proteins L14 and L19.

One of the primary rRNA binding proteins, it binds directly near the 3'-end of the 23S rRNA, where it nucleates assembly of the 50S subunit. The sequence is that of Large ribosomal subunit protein uL3 from Mycoplasma pneumoniae (strain ATCC 29342 / M129 / Subtype 1) (Mycoplasmoides pneumoniae).